We begin with the raw amino-acid sequence, 322 residues long: tRNA U34 carboxymethyltransferase (322 aa).

Carboxy-S-adenosyl-L-methionine-binding positions include Lys-90, Trp-104, Lys-109, Gly-129, 151–153 (DPT), 179–180 (ME), Met-195, Tyr-199, and Arg-314.

The protein belongs to the class I-like SAM-binding methyltransferase superfamily. CmoB family. In terms of assembly, homotetramer.

It carries out the reaction carboxy-S-adenosyl-L-methionine + 5-hydroxyuridine(34) in tRNA = 5-carboxymethoxyuridine(34) in tRNA + S-adenosyl-L-homocysteine + H(+). Its function is as follows. Catalyzes carboxymethyl transfer from carboxy-S-adenosyl-L-methionine (Cx-SAM) to 5-hydroxyuridine (ho5U) to form 5-carboxymethoxyuridine (cmo5U) at position 34 in tRNAs. The protein is tRNA U34 carboxymethyltransferase of Alcanivorax borkumensis (strain ATCC 700651 / DSM 11573 / NCIMB 13689 / SK2).